The primary structure comprises 395 residues: Elongation factor Tu (395 aa).

The 196-residue stretch at 10 to 205 folds into the tr-type G domain; sequence KPHVNIGTIG…AVDSYIPMPE (196 aa). The interval 19–26 is G1; that stretch reads GHIDHGKT. 19-26 is a GTP binding site; it reads GHIDHGKT. Thr-26 lines the Mg(2+) pocket. The G2 stretch occupies residues 61–65; the sequence is GITIA. The segment at 82–85 is G3; sequence DCPG. GTP is bound by residues 82 to 86 and 137 to 140; these read DCPGH and NKVD. A G4 region spans residues 137–140; it reads NKVD. The segment at 175–177 is G5; sequence SAL.

This sequence belongs to the TRAFAC class translation factor GTPase superfamily. Classic translation factor GTPase family. EF-Tu/EF-1A subfamily. As to quaternary structure, monomer.

The protein localises to the cytoplasm. The enzyme catalyses GTP + H2O = GDP + phosphate + H(+). GTP hydrolase that promotes the GTP-dependent binding of aminoacyl-tRNA to the A-site of ribosomes during protein biosynthesis. In Solibacter usitatus (strain Ellin6076), this protein is Elongation factor Tu.